A 366-amino-acid chain; its full sequence is Anhydro-N-acetylmuramic acid kinase (366 aa).

15 to 22 (GTSLDGVD) serves as a coordination point for ATP.

It belongs to the anhydro-N-acetylmuramic acid kinase family.

It catalyses the reaction 1,6-anhydro-N-acetyl-beta-muramate + ATP + H2O = N-acetyl-D-muramate 6-phosphate + ADP + H(+). The protein operates within amino-sugar metabolism; 1,6-anhydro-N-acetylmuramate degradation. It functions in the pathway cell wall biogenesis; peptidoglycan recycling. Functionally, catalyzes the specific phosphorylation of 1,6-anhydro-N-acetylmuramic acid (anhMurNAc) with the simultaneous cleavage of the 1,6-anhydro ring, generating MurNAc-6-P. Is required for the utilization of anhMurNAc either imported from the medium or derived from its own cell wall murein, and thus plays a role in cell wall recycling. The protein is Anhydro-N-acetylmuramic acid kinase of Hydrogenovibrio crunogenus (strain DSM 25203 / XCL-2) (Thiomicrospira crunogena).